The primary structure comprises 137 residues: Large ribosomal subunit protein uL16 (137 aa).

Belongs to the universal ribosomal protein uL16 family. Part of the 50S ribosomal subunit.

In terms of biological role, binds 23S rRNA and is also seen to make contacts with the A and possibly P site tRNAs. The chain is Large ribosomal subunit protein uL16 from Chelativorans sp. (strain BNC1).